The following is a 221-amino-acid chain: Iron-sulfur cluster assembly SufBD family protein ycf24 (221 aa).

It belongs to the iron-sulfur cluster assembly SufBD family.

The protein localises to the plastid. It localises to the chloroplast. The sequence is that of Iron-sulfur cluster assembly SufBD family protein ycf24 (ycf24) from Galdieria sulphuraria (Red alga).